The sequence spans 66 residues: ATP synthase protein 8 (66 aa).

A helical transmembrane segment spans residues proline 8–threonine 24. Lysine 54 is modified (N6-acetyllysine; alternate). The residue at position 54 (lysine 54) is an N6-succinyllysine; alternate. At lysine 57 the chain carries N6-acetyllysine.

It belongs to the ATPase protein 8 family. F-type ATPases have 2 components, CF(1) - the catalytic core - and CF(0) - the membrane proton channel. Component of an ATP synthase complex composed of ATP5PB, ATP5MC1, ATP5F1E, ATP5PD, ATP5ME, ATP5PF, ATP5MF, MT-ATP6, MT-ATP8, ATP5F1A, ATP5F1B, ATP5F1D, ATP5F1C, ATP5PO, ATP5MG, ATP5MK and ATP5MJ. Interacts with PRICKLE3.

It localises to the mitochondrion membrane. Functionally, mitochondrial membrane ATP synthase (F(1)F(0) ATP synthase or Complex V) produces ATP from ADP in the presence of a proton gradient across the membrane which is generated by electron transport complexes of the respiratory chain. F-type ATPases consist of two structural domains, F(1) - containing the extramembraneous catalytic core and F(0) - containing the membrane proton channel, linked together by a central stalk and a peripheral stalk. During catalysis, ATP synthesis in the catalytic domain of F(1) is coupled via a rotary mechanism of the central stalk subunits to proton translocation. Part of the complex F(0) domain. Minor subunit located with subunit a in the membrane. This chain is ATP synthase protein 8 (MT-ATP8), found in Alouatta guariba (Brown howler monkey).